A 317-amino-acid chain; its full sequence is Mitochondrial thiamine pyrophosphate carrier 1 (317 aa).

The next 6 helical transmembrane spans lie at 15 to 37 (TVSW…MATA), 80 to 100 (IPAT…YSWF), 118 to 138 (LTVG…LDLL), 168 to 190 (GFFT…MFLT), 205 to 227 (FWSR…TMVF), and 281 to 300 (GLTM…LFVY). Solcar repeat units lie at residues 16–103 (VSWY…FNNV), 112–197 (SQQG…VNIV), and 206–306 (WSRP…TMDL).

The protein belongs to the mitochondrial carrier (TC 2.A.29) family.

It is found in the mitochondrion inner membrane. Its function is as follows. Mitochondrial transporter that mediates uptake of thiamine pyrophosphate (ThPP) into mitochondria. The protein is Mitochondrial thiamine pyrophosphate carrier 1 (TPC1) of Kluyveromyces lactis (strain ATCC 8585 / CBS 2359 / DSM 70799 / NBRC 1267 / NRRL Y-1140 / WM37) (Yeast).